Reading from the N-terminus, the 298-residue chain is Porphobilinogen deaminase (298 aa).

At Cys-242 the chain carries S-(dipyrrolylmethanemethyl)cysteine.

The protein belongs to the HMBS family. As to quaternary structure, monomer. Requires dipyrromethane as cofactor.

The enzyme catalyses 4 porphobilinogen + H2O = hydroxymethylbilane + 4 NH4(+). The protein operates within porphyrin-containing compound metabolism; protoporphyrin-IX biosynthesis; coproporphyrinogen-III from 5-aminolevulinate: step 2/4. Functionally, tetrapolymerization of the monopyrrole PBG into the hydroxymethylbilane pre-uroporphyrinogen in several discrete steps. The protein is Porphobilinogen deaminase of Fusobacterium nucleatum subsp. nucleatum (strain ATCC 25586 / DSM 15643 / BCRC 10681 / CIP 101130 / JCM 8532 / KCTC 2640 / LMG 13131 / VPI 4355).